The sequence spans 211 residues: Uracil phosphoribosyltransferase (211 aa).

5-phospho-alpha-D-ribose 1-diphosphate contacts are provided by residues R78, R103, and 130–138; that span reads DPMLATGGT. Uracil contacts are provided by residues I195 and 200 to 202; that span reads GDA. D201 serves as a coordination point for 5-phospho-alpha-D-ribose 1-diphosphate.

It belongs to the UPRTase family. Requires Mg(2+) as cofactor.

It catalyses the reaction UMP + diphosphate = 5-phospho-alpha-D-ribose 1-diphosphate + uracil. It functions in the pathway pyrimidine metabolism; UMP biosynthesis via salvage pathway; UMP from uracil: step 1/1. Its activity is regulated as follows. Allosterically activated by GTP. In terms of biological role, catalyzes the conversion of uracil and 5-phospho-alpha-D-ribose 1-diphosphate (PRPP) to UMP and diphosphate. The chain is Uracil phosphoribosyltransferase from Streptomyces avermitilis (strain ATCC 31267 / DSM 46492 / JCM 5070 / NBRC 14893 / NCIMB 12804 / NRRL 8165 / MA-4680).